Here is a 153-residue protein sequence, read N- to C-terminus: Pheromone-binding protein Gp-9 (153 aa).

The N-terminal stretch at 1–19 (MKTFVLHIFIFALVAFASA) is a signal peptide. Intrachain disulfides connect C37–C77, C73–C129, and C118–C138.

Belongs to the PBP/GOBP family. In terms of assembly, homodimer.

Its subcellular location is the secreted. In terms of biological role, colony queen number, a major feature of social organization, is associated with worker genotype for Gp-9. Colonies are headed by either a single reproductive queen (monogyne form) or multiple queens (polygyne form). Differences in worker Gp-9 genotypes between social forms may cause differences in workers' abilities to recognize queens and regulate their numbers. The polypeptide is Pheromone-binding protein Gp-9 (Solenopsis saevissima (Fire ant)).